Here is a 715-residue protein sequence, read N- to C-terminus: Methionine--tRNA ligase (715 aa).

Positions 17–27 match the 'HIGH' region motif; it reads PYANGPIHLGH. Zn(2+) is bound by residues Cys148, Cys151, Cys161, and Cys164. Positions 359-363 match the 'KMSKS' region motif; that stretch reads KMSKS. Lys362 contributes to the ATP binding site. The tRNA-binding domain maps to 614–715; sequence DLSKVELRVG…KDAKPGDRLK (102 aa).

This sequence belongs to the class-I aminoacyl-tRNA synthetase family. MetG type 1 subfamily. Homodimer. It depends on Zn(2+) as a cofactor.

The protein localises to the cytoplasm. It catalyses the reaction tRNA(Met) + L-methionine + ATP = L-methionyl-tRNA(Met) + AMP + diphosphate. Is required not only for elongation of protein synthesis but also for the initiation of all mRNA translation through initiator tRNA(fMet) aminoacylation. This is Methionine--tRNA ligase from Leptospira interrogans serogroup Icterohaemorrhagiae serovar Lai (strain 56601).